Reading from the N-terminus, the 432-residue chain is MAIKDLTATTGDSSLPLIKSPPSETTGGDRTSALQTLGNIIVSIVGTGVLGLPYAFRIAGWLAGSLGVIIVGFATYYCMLLLIQCRDKLESEEGEEESKTYGDLGFKCMGTKGRYLTEFLIFTAQCGGSVAYLVFIGRNLSSIFSSYGLSMVSFILILVPIEVGLSWITSLSALSPFSIFADICNIIAMCFVVKENVEMVIEGDFSFSDRTAISSTIGGLPFAGGVAVFCFEGFAMTLALESSMREREAFPKLLAKVLAGITFVYVLFGFCGYMAYGDQTKDIITLNLPNNWSAIAVQIGLCVGLTFTFPIMVHPLNEIIEQKLKRIDWLQKHHNGYSNETGSVSKFAIFTTRTLLVVGLAAIASLVPGFGTFASLVGSTLCALISFVLPASYHLTLLGPSLNVWNKSIDVFIVICGLIFAVYGTYNTIVGV.

The segment at 1-30 (MAIKDLTATTGDSSLPLIKSPPSETTGGDR) is disordered. Residues 1-35 (MAIKDLTATTGDSSLPLIKSPPSETTGGDRTSALQ) lie on the Cytoplasmic side of the membrane. A helical transmembrane segment spans residues 36–56 (TLGNIIVSIVGTGVLGLPYAF). The Lumenal segment spans residues 57 to 62 (RIAGWL). The helical transmembrane segment at 63 to 83 (AGSLGVIIVGFATYYCMLLLI) threads the bilayer. Topologically, residues 84–115 (QCRDKLESEEGEEESKTYGDLGFKCMGTKGRY) are cytoplasmic. Residues 116-136 (LTEFLIFTAQCGGSVAYLVFI) traverse the membrane as a helical segment. Over 137–147 (GRNLSSIFSSY) the chain is Lumenal. A helical transmembrane segment spans residues 148 to 168 (GLSMVSFILILVPIEVGLSWI). Residues 169–172 (TSLS) are Cytoplasmic-facing. Residues 173 to 193 (ALSPFSIFADICNIIAMCFVV) form a helical membrane-spanning segment. The Lumenal segment spans residues 194-219 (KENVEMVIEGDFSFSDRTAISSTIGG). Residues 220-240 (LPFAGGVAVFCFEGFAMTLAL) traverse the membrane as a helical segment. The Cytoplasmic portion of the chain corresponds to 241–256 (ESSMREREAFPKLLAK). Residues 257-277 (VLAGITFVYVLFGFCGYMAYG) form a helical membrane-spanning segment. At 278-292 (DQTKDIITLNLPNNW) the chain is on the lumenal side. A helical membrane pass occupies residues 293–313 (SAIAVQIGLCVGLTFTFPIMV). At 314–353 (HPLNEIIEQKLKRIDWLQKHHNGYSNETGSVSKFAIFTTR) the chain is on the cytoplasmic side. Residues 354 to 374 (TLLVVGLAAIASLVPGFGTFA) form a helical membrane-spanning segment. The Lumenal segment spans residues 375-379 (SLVGS). The helical transmembrane segment at 380–400 (TLCALISFVLPASYHLTLLGP) threads the bilayer. At 401–410 (SLNVWNKSID) the chain is on the cytoplasmic side. Residues 411 to 431 (VFIVICGLIFAVYGTYNTIVG) traverse the membrane as a helical segment. Residue Val432 is a topological domain, lumenal.

It belongs to the amino acid/polyamine transporter 2 family. Amino acid/auxin permease (AAAP) (TC 2.A.18.8) subfamily. Ubiquitous. Highly expressed in flowers and cauline leaves and at lower levels in stems, leaves and roots.

It is found in the endoplasmic reticulum membrane. Translocates aromatic and neutral amino acids such as tyrosine, tryptophan, phenylalanine, histidine, proline, leucine, valine, glutamine, as well as arginine. Transports the auxins indole-3-acetic acid (IAA) and 2,4-dichlorophenoxyacetic acid (2,4-D). The chain is Amino acid transporter ANT1 from Arabidopsis thaliana (Mouse-ear cress).